The sequence spans 97 residues: Late transcription unit B protein (97 aa).

The tract at residues 24–45 is disordered; the sequence is SIEGETKKEHKHHYSTASKEKE.

This is Late transcription unit B protein (ltuB) from Chlamydia trachomatis serovar D (strain ATCC VR-885 / DSM 19411 / UW-3/Cx).